We begin with the raw amino-acid sequence, 186 residues long: uncharacterized protein (186 aa).

The protein belongs to the MG032/MG096/MG288 family.

This is an uncharacterized protein from Mycoplasma pneumoniae (strain ATCC 29342 / M129 / Subtype 1) (Mycoplasmoides pneumoniae).